The sequence spans 594 residues: 4-alpha-glucanotransferase DPE1, chloroplastic/amyloplastic (594 aa).

The N-terminal 37 residues, Met-1–Arg-37, are a transit peptide targeting the chloroplast.

The protein belongs to the disproportionating enzyme family.

It localises to the plastid. The protein resides in the chloroplast. It is found in the amyloplast. The catalysed reaction is Transfers a segment of a (1-&gt;4)-alpha-D-glucan to a new position in an acceptor, which may be glucose or a (1-&gt;4)-alpha-D-glucan.. Chloroplastic alpha-glucanotransferase involved in maltotriose metabolism. The protein is 4-alpha-glucanotransferase DPE1, chloroplastic/amyloplastic (DPE1) of Oryza sativa subsp. japonica (Rice).